Reading from the N-terminus, the 351-residue chain is Ubiquinol oxidase 4, chloroplastic/chromoplastic (351 aa).

The transit peptide at methionine 1–glutamine 56 directs the protein to the chloroplast and chromoplast. Residues glutamate 71–serine 91 form a disordered region. A helical transmembrane segment spans residues phenylalanine 132 to methionine 152. Fe cation-binding residues include glutamate 136, glutamate 175, and histidine 178. Residues phenylalanine 195–serine 215 traverse the membrane as a helical segment. Fe cation contacts are provided by glutamate 227, glutamate 296, and histidine 299.

Belongs to the alternative oxidase family. It depends on Fe cation as a cofactor. Ubiquitous.

It localises to the plastid. The protein localises to the chloroplast thylakoid membrane. It is found in the chromoplast membrane. It catalyses the reaction 2 a ubiquinol + O2 = 2 a ubiquinone + 2 H2O. In terms of biological role, acts early in chloroplast biogenesis as a component of a redox chain responsible for phytoene desaturation. Prevents the generation of toxic oxygen radicals and photooxidation of the nascent photosynthetic apparatus. Involved in the differentiation of multiple plastid types, including chloroplasts, amyloplasts, and etioplasts. Might participate in the chloroplast respiratory chain. The polypeptide is Ubiquinol oxidase 4, chloroplastic/chromoplastic (AOX4) (Arabidopsis thaliana (Mouse-ear cress)).